The sequence spans 432 residues: Adenylosuccinate synthetase (432 aa).

Residues 12 to 18 and 40 to 42 each bind GTP; these read GDEGKGK and GHT. Aspartate 13 serves as the catalytic Proton acceptor. 2 residues coordinate Mg(2+): aspartate 13 and glycine 40. IMP contacts are provided by residues 13–16, 38–41, threonine 130, arginine 144, glutamine 225, threonine 240, and arginine 304; these read DEGK and NAGH. Histidine 41 (proton donor) is an active-site residue. 300-306 serves as a coordination point for substrate; the sequence is STTGRPR. GTP is bound by residues arginine 306, 332-334, and 414-416; these read KLD and SVG.

The protein belongs to the adenylosuccinate synthetase family. Homodimer. It depends on Mg(2+) as a cofactor.

It is found in the cytoplasm. It catalyses the reaction IMP + L-aspartate + GTP = N(6)-(1,2-dicarboxyethyl)-AMP + GDP + phosphate + 2 H(+). The protein operates within purine metabolism; AMP biosynthesis via de novo pathway; AMP from IMP: step 1/2. In terms of biological role, plays an important role in the de novo pathway of purine nucleotide biosynthesis. Catalyzes the first committed step in the biosynthesis of AMP from IMP. The sequence is that of Adenylosuccinate synthetase from Citrifermentans bemidjiense (strain ATCC BAA-1014 / DSM 16622 / JCM 12645 / Bem) (Geobacter bemidjiensis).